A 765-amino-acid chain; its full sequence is SNF-related serine/threonine-protein kinase (765 aa).

In terms of domain architecture, Protein kinase spans 16-269 (YDLDKTLGRG…LEEIENHPWL (254 aa)). ATP is bound by residues 22–30 (LGRGHFAVV) and Lys45. The active-site Proton acceptor is Asp139. Ser162 carries the post-translational modification Phosphoserine. Thr173 is subject to Phosphothreonine; by LKB1. The 44-residue stretch at 291–334 (SEEEHNSIIQRMVLGDIADRDAIVEALETNRYNHITATYFLLAE) folds into the UBA domain. 5 positions are modified to phosphoserine: Ser362, Ser390, Ser482, Ser495, and Ser518. Positions 512-634 (LKMNIASPGT…RCAGPSNSMQ (123 aa)) are disordered. Residues 522–532 (VHKRYHRRKSQ) show a composition bias toward basic residues. Over residues 533–542 (GRGSSCSSSE) the composition is skewed to low complexity. Arg534 carries the post-translational modification Omega-N-methylarginine. Basic and acidic residues predominate over residues 549–558 (ESRRRLDKDS). Positions 603 to 614 (AGGGSPSSGSGG) are enriched in gly residues. The residue at position 607 (Ser607) is a Phosphoserine.

It belongs to the protein kinase superfamily. CAMK Ser/Thr protein kinase family. Mg(2+) is required as a cofactor. Autophosphorylated. Phosphorylation on Thr-173 by STK11/LKB1 in complex with STE20-related adapter-alpha (STRADA) pseudo kinase and CAB39. Expressed in hematopoietic progenitor cells and leukemic cell lines. Weakly expressed in the testis.

Its subcellular location is the nucleus. It carries out the reaction L-seryl-[protein] + ATP = O-phospho-L-seryl-[protein] + ADP + H(+). It catalyses the reaction L-threonyl-[protein] + ATP = O-phospho-L-threonyl-[protein] + ADP + H(+). Its activity is regulated as follows. Activated by phosphorylation on Thr-173. Functionally, may play a role in hematopoietic cell proliferation or differentiation. Potential mediator of neuronal apoptosis. The polypeptide is SNF-related serine/threonine-protein kinase (Homo sapiens (Human)).